A 244-amino-acid polypeptide reads, in one-letter code: tRNA pseudouridine synthase A (244 aa).

D52 serves as the catalytic Nucleophile. Position 111 (Y111) interacts with substrate.

It belongs to the tRNA pseudouridine synthase TruA family. Homodimer.

It catalyses the reaction uridine(38/39/40) in tRNA = pseudouridine(38/39/40) in tRNA. Functionally, formation of pseudouridine at positions 38, 39 and 40 in the anticodon stem and loop of transfer RNAs. This Thermosipho melanesiensis (strain DSM 12029 / CIP 104789 / BI429) protein is tRNA pseudouridine synthase A.